The sequence spans 70 residues: Large ribosomal subunit protein uL29 (70 aa).

The protein belongs to the universal ribosomal protein uL29 family.

In Gloeobacter violaceus (strain ATCC 29082 / PCC 7421), this protein is Large ribosomal subunit protein uL29.